Reading from the N-terminus, the 352-residue chain is Phosphoribosylformylglycinamidine cyclo-ligase (352 aa).

Belongs to the AIR synthase family.

It localises to the cytoplasm. The catalysed reaction is 2-formamido-N(1)-(5-O-phospho-beta-D-ribosyl)acetamidine + ATP = 5-amino-1-(5-phospho-beta-D-ribosyl)imidazole + ADP + phosphate + H(+). The protein operates within purine metabolism; IMP biosynthesis via de novo pathway; 5-amino-1-(5-phospho-D-ribosyl)imidazole from N(2)-formyl-N(1)-(5-phospho-D-ribosyl)glycinamide: step 2/2. The sequence is that of Phosphoribosylformylglycinamidine cyclo-ligase from Pseudomonas savastanoi pv. phaseolicola (strain 1448A / Race 6) (Pseudomonas syringae pv. phaseolicola (strain 1448A / Race 6)).